Here is a 201-residue protein sequence, read N- to C-terminus: Large ribosomal subunit protein uL4 (201 aa).

Residues 44–71 (RAQKTRAEVSGSGKKPWRQKGTGRARSG) form a disordered region.

This sequence belongs to the universal ribosomal protein uL4 family. Part of the 50S ribosomal subunit.

In terms of biological role, one of the primary rRNA binding proteins, this protein initially binds near the 5'-end of the 23S rRNA. It is important during the early stages of 50S assembly. It makes multiple contacts with different domains of the 23S rRNA in the assembled 50S subunit and ribosome. Forms part of the polypeptide exit tunnel. This is Large ribosomal subunit protein uL4 from Actinobacillus succinogenes (strain ATCC 55618 / DSM 22257 / CCUG 43843 / 130Z).